The primary structure comprises 338 residues: Nodulation outer protein L (338 aa).

The segment covering Met1–Gln14 has biased composition (polar residues). Disordered regions lie at residues Met1–Val48, Thr85–Thr158, Ser187–Arg209, and Pro230–Gly259. Basic and acidic residues predominate over residues Thr85–Pro97. Over residues Val126–Leu138 the composition is skewed to polar residues. The span at Ser242–Ala258 shows a compositional bias: polar residues.

It is found in the secreted. Functionally, putative symbiotic effector that modulates nodulation in legumes. When delivered into the plant cell, modulates the activity of signal transduction pathways that culminate in activation of PR proteins. This chain is Nodulation outer protein L (nopL), found in Sinorhizobium fredii (strain NBRC 101917 / NGR234).